We begin with the raw amino-acid sequence, 165 residues long: NADPH-dependent 7-cyano-7-deazaguanine reductase (165 aa).

Cys56 acts as the Thioimide intermediate in catalysis. The active-site Proton donor is the Asp63. Substrate is bound by residues Val78 to Ser80 and His97 to Glu98.

The protein belongs to the GTP cyclohydrolase I family. QueF type 1 subfamily.

It is found in the cytoplasm. It catalyses the reaction 7-aminomethyl-7-carbaguanine + 2 NADP(+) = 7-cyano-7-deazaguanine + 2 NADPH + 3 H(+). The protein operates within tRNA modification; tRNA-queuosine biosynthesis. Catalyzes the NADPH-dependent reduction of 7-cyano-7-deazaguanine (preQ0) to 7-aminomethyl-7-deazaguanine (preQ1). This is NADPH-dependent 7-cyano-7-deazaguanine reductase from Bacillus cereus (strain ATCC 14579 / DSM 31 / CCUG 7414 / JCM 2152 / NBRC 15305 / NCIMB 9373 / NCTC 2599 / NRRL B-3711).